Reading from the N-terminus, the 344-residue chain is Protein RecA (344 aa).

65–72 (GPESSGKT) serves as a coordination point for ATP.

The protein belongs to the RecA family.

It is found in the cytoplasm. Can catalyze the hydrolysis of ATP in the presence of single-stranded DNA, the ATP-dependent uptake of single-stranded DNA by duplex DNA, and the ATP-dependent hybridization of homologous single-stranded DNAs. It interacts with LexA causing its activation and leading to its autocatalytic cleavage. The protein is Protein RecA of Nitratiruptor sp. (strain SB155-2).